The following is a 145-amino-acid chain: 3-dehydroquinate dehydratase (145 aa).

Residue Y22 is the Proton acceptor of the active site. 3 residues coordinate substrate: N71, H77, and D84. H97 (proton donor) is an active-site residue. Substrate is bound by residues 98 to 99 (LS) and R108.

This sequence belongs to the type-II 3-dehydroquinase family. As to quaternary structure, homododecamer.

The enzyme catalyses 3-dehydroquinate = 3-dehydroshikimate + H2O. It participates in metabolic intermediate biosynthesis; chorismate biosynthesis; chorismate from D-erythrose 4-phosphate and phosphoenolpyruvate: step 3/7. Catalyzes a trans-dehydration via an enolate intermediate. The sequence is that of 3-dehydroquinate dehydratase from Francisella tularensis subsp. tularensis (strain WY96-3418).